Reading from the N-terminus, the 606-residue chain is NADH-ubiquinone oxidoreductase chain 5 (606 aa).

15 helical membrane-spanning segments follow: residues 1–21, 43–63, 87–107, 117–137, 140–160, 171–191, 201–221, 241–261, 273–293, 310–330, 365–385, 409–429, 457–477, 488–508, and 582–602; these read MNMF…PIIM, AFMI…ETIF, MIFV…SMWY, FFKY…ANNM, LFIG…WWYG, AVLY…WFLL, IFIT…LAAT, TPVS…FLLI, IQTL…ICAL, LGLM…LHIC, VLPF…GMPF, LLIT…IMFF, LLIG…PTTI, MTAL…NLTT, and GLIK…LLIL.

This sequence belongs to the complex I subunit 5 family. In terms of assembly, core subunit of respiratory chain NADH dehydrogenase (Complex I) which is composed of 45 different subunits.

The protein resides in the mitochondrion inner membrane. The enzyme catalyses a ubiquinone + NADH + 5 H(+)(in) = a ubiquinol + NAD(+) + 4 H(+)(out). Functionally, core subunit of the mitochondrial membrane respiratory chain NADH dehydrogenase (Complex I) which catalyzes electron transfer from NADH through the respiratory chain, using ubiquinone as an electron acceptor. Essential for the catalytic activity and assembly of complex I. The polypeptide is NADH-ubiquinone oxidoreductase chain 5 (MT-ND5) (Canis lupus familiaris (Dog)).